The sequence spans 154 residues: Superoxide dismutase [Cu-Zn] (154 aa).

Cu cation is bound by residues histidine 47, histidine 49, and histidine 64. Cysteine 58 and cysteine 147 are joined by a disulfide. Zn(2+)-binding residues include histidine 64, histidine 72, histidine 81, and aspartate 84. Histidine 121 is a Cu cation binding site. Residues 125-136 (DDLGKGGNEESL) are compositionally biased toward basic and acidic residues. The segment at 125 to 144 (DDLGKGGNEESLKTGNAGPR) is disordered. Substrate is bound at residue arginine 144.

It belongs to the Cu-Zn superoxide dismutase family. Homodimer. It depends on Cu cation as a cofactor. Zn(2+) serves as cofactor.

The protein resides in the cytoplasm. It catalyses the reaction 2 superoxide + 2 H(+) = H2O2 + O2. Functionally, destroys radicals which are normally produced within the cells and which are toxic to biological systems. This chain is Superoxide dismutase [Cu-Zn] (SOD1), found in Candida glabrata (strain ATCC 2001 / BCRC 20586 / JCM 3761 / NBRC 0622 / NRRL Y-65 / CBS 138) (Yeast).